We begin with the raw amino-acid sequence, 307 residues long: D-alanine--D-alanine ligase (307 aa).

Residues 101-301 (KTVMRAAGVS…FGELVRWMVE (201 aa)) enclose the ATP-grasp domain. ATP is bound at residue 127-182 (PLTPPYVVKPIAEGSSMGVIIVRDERSHPPQILASDEWVYGEEVLAETYVAGRELT). Positions 251, 268, and 270 each coordinate Mg(2+).

The protein belongs to the D-alanine--D-alanine ligase family. It depends on Mg(2+) as a cofactor. The cofactor is Mn(2+).

It localises to the cytoplasm. It catalyses the reaction 2 D-alanine + ATP = D-alanyl-D-alanine + ADP + phosphate + H(+). It participates in cell wall biogenesis; peptidoglycan biosynthesis. Functionally, cell wall formation. The polypeptide is D-alanine--D-alanine ligase (Methylorubrum extorquens (strain PA1) (Methylobacterium extorquens)).